Consider the following 104-residue polypeptide: Late embryogenis abundant protein 41 (104 aa).

A mitochondrion-targeting transit peptide spans 1–31 (MAARSLSGAVKSLCSAASGSLSCSIVLRRSY).

It belongs to the LEA type 3 family.

It localises to the mitochondrion. The sequence is that of Late embryogenis abundant protein 41 from Arabidopsis thaliana (Mouse-ear cress).